The following is a 286-amino-acid chain: ATP synthase gamma chain (286 aa).

The protein belongs to the ATPase gamma chain family. As to quaternary structure, F-type ATPases have 2 components, CF(1) - the catalytic core - and CF(0) - the membrane proton channel. CF(1) has five subunits: alpha(3), beta(3), gamma(1), delta(1), epsilon(1). CF(0) has three main subunits: a, b and c.

It is found in the cell inner membrane. Produces ATP from ADP in the presence of a proton gradient across the membrane. The gamma chain is believed to be important in regulating ATPase activity and the flow of protons through the CF(0) complex. The sequence is that of ATP synthase gamma chain from Pseudomonas fluorescens (strain Pf0-1).